The sequence spans 410 residues: uncharacterized protein (410 aa).

A signal peptide spans 1-41; it reads MVKSFRMKALIAGAAVAAAVSAGAVSDVPAAKVLQPTAAYA.

In terms of assembly, interacts with PcrA, Pdp, YclM, YkvL, YhcQ and YomL. The interaction with PcrA is not essential for cell viability or repair of UV-induced lesions.

The protein resides in the secreted. Increases the processivity of the PcrA helicase, but does not bind to DNA. This is an uncharacterized protein from Bacillus subtilis (strain 168).